The sequence spans 255 residues: Cobalt-precorrin-6A reductase (255 aa).

It belongs to the precorrin-6x reductase family.

It carries out the reaction Co-precorrin-6B + NAD(+) = Co-precorrin-6A + NADH + H(+). It participates in cofactor biosynthesis; adenosylcobalamin biosynthesis; cob(II)yrinate a,c-diamide from sirohydrochlorin (anaerobic route): step 7/10. In terms of biological role, catalyzes the reduction of the macrocycle of cobalt-precorrin-6A to cobalt-precorrin-6B. This chain is Cobalt-precorrin-6A reductase (cbiJ), found in Priestia megaterium (Bacillus megaterium).